The chain runs to 153 residues: Xanthine-guanine phosphoribosyltransferase (153 aa).

Residues 37-38 (RG), arginine 69, and 88-96 (DDLVDTGGT) contribute to the 5-phospho-alpha-D-ribose 1-diphosphate site. Arginine 69 provides a ligand contact to GMP. Aspartate 89 is a Mg(2+) binding site. The guanine site is built by aspartate 92 and isoleucine 135. Xanthine-binding residues include aspartate 92 and isoleucine 135. GMP is bound by residues 92 to 96 (DTGGT) and 134 to 135 (WI).

It belongs to the purine/pyrimidine phosphoribosyltransferase family. XGPT subfamily. Homotetramer. Mg(2+) is required as a cofactor.

It is found in the cell inner membrane. It catalyses the reaction GMP + diphosphate = guanine + 5-phospho-alpha-D-ribose 1-diphosphate. The enzyme catalyses XMP + diphosphate = xanthine + 5-phospho-alpha-D-ribose 1-diphosphate. It carries out the reaction IMP + diphosphate = hypoxanthine + 5-phospho-alpha-D-ribose 1-diphosphate. The protein operates within purine metabolism; GMP biosynthesis via salvage pathway; GMP from guanine: step 1/1. It functions in the pathway purine metabolism; XMP biosynthesis via salvage pathway; XMP from xanthine: step 1/1. In terms of biological role, purine salvage pathway enzyme that catalyzes the transfer of the ribosyl-5-phosphate group from 5-phospho-alpha-D-ribose 1-diphosphate (PRPP) to the N9 position of the 6-oxopurines guanine and xanthine to form the corresponding ribonucleotides GMP (guanosine 5'-monophosphate) and XMP (xanthosine 5'-monophosphate), with the release of PPi. To a lesser extent, also acts on hypoxanthine. The protein is Xanthine-guanine phosphoribosyltransferase of Photorhabdus laumondii subsp. laumondii (strain DSM 15139 / CIP 105565 / TT01) (Photorhabdus luminescens subsp. laumondii).